A 442-amino-acid chain; its full sequence is Proline--tRNA ligase (442 aa).

It belongs to the class-II aminoacyl-tRNA synthetase family. ProS type 2 subfamily. Homodimer.

The protein localises to the cytoplasm. It carries out the reaction tRNA(Pro) + L-proline + ATP = L-prolyl-tRNA(Pro) + AMP + diphosphate. In terms of biological role, catalyzes the attachment of proline to tRNA(Pro) in a two-step reaction: proline is first activated by ATP to form Pro-AMP and then transferred to the acceptor end of tRNA(Pro). In Brucella suis (strain ATCC 23445 / NCTC 10510), this protein is Proline--tRNA ligase.